The sequence spans 314 residues: DNA oxidative demethylase ALKBH2 (314 aa).

Residues 1–28 (MTNPLNSTAANRSNQPSSDGISDGQITN) are compositionally biased toward polar residues. A disordered region spans residues 1 to 75 (MTNPLNSTAA…KRFHYHQDQR (75 aa)). The span at 57–75 (NGKDDSDTKKRFHYHQDQR) shows a compositional bias: basic and acidic residues. Substrate-binding positions include tryptophan 132 and 160–163 (ALVY). The region spanning 194 to 314 (RFNSLLLNRY…RINLTFRLVL (121 aa)) is the Fe2OG dioxygenase domain. 201-203 (NRY) contacts 2-oxoglutarate. Fe cation is bound by residues histidine 213 and aspartate 215. Position 216 (aspartate 216) interacts with substrate. The tract at residues 242-271 (KKDEESSQGKTGDSGPAKKRLKRSSREDQQ) is disordered. A Fe cation-binding site is contributed by histidine 293. 2-oxoglutarate-binding positions include arginine 305 and 305–311 (RINLTFR).

It belongs to the alkB family. The cofactor is Fe(2+). In terms of tissue distribution, expressed ubiquitously, including in seedlings, leaves and flowers.

The protein resides in the nucleus. It carries out the reaction a methylated nucleobase within DNA + 2-oxoglutarate + O2 = a nucleobase within DNA + formaldehyde + succinate + CO2. Its function is as follows. Dioxygenase that repairs alkylated DNA containing 1-methyladenine and 1-ethenoadenine by oxidative demethylation. Accepts double-stranded and single-stranded substrates, with a preference for dsDNA over ssDNA. Confers resistance to methylating agents such as methylmethanesulphonate (MMS). The chain is DNA oxidative demethylase ALKBH2 (ALKBH2) from Arabidopsis thaliana (Mouse-ear cress).